The chain runs to 201 residues: 3-isopropylmalate dehydratase small subunit (201 aa).

Belongs to the LeuD family. LeuD type 1 subfamily. Heterodimer of LeuC and LeuD.

The enzyme catalyses (2R,3S)-3-isopropylmalate = (2S)-2-isopropylmalate. It participates in amino-acid biosynthesis; L-leucine biosynthesis; L-leucine from 3-methyl-2-oxobutanoate: step 2/4. In terms of biological role, catalyzes the isomerization between 2-isopropylmalate and 3-isopropylmalate, via the formation of 2-isopropylmaleate. This chain is 3-isopropylmalate dehydratase small subunit, found in Escherichia coli O127:H6 (strain E2348/69 / EPEC).